Reading from the N-terminus, the 241-residue chain is Polycomb group RING finger protein 3 (241 aa).

An RING-type zinc finger spans residues 17 to 56 (CRLCSGYLIDATTVTECLHTFCRSCLVKYLEENNTCPTCR). The interval 115–148 (AKQHLDPRNGETKADDNSNKETAEEKQEEDNDYH) is disordered. The span at 117-139 (QHLDPRNGETKADDNSNKETAEE) shows a compositional bias: basic and acidic residues. An interaction with BCORL1 region spans residues 131–241 (NSNKETAEEK…LHYRPKMDLL (111 aa)).

Component of a PRC1-like complex that contains PCGF3, RNF2 and RYBP. Interacts with RNF2. Interacts with CBX6, CBX7 and CBX8. Interacts with BCORL1.

The protein localises to the nucleus. The protein resides in the nucleoplasm. Functionally, component of a Polycomb group (PcG) multiprotein PRC1-like complex, a complex class required to maintain the transcriptionally repressive state of many genes, including Hox genes, throughout development. PcG PRC1 complex acts via chromatin remodeling and modification of histones; it mediates monoubiquitination of histone H2A 'Lys-119', rendering chromatin heritably changed in its expressibility. Within the PRC1-like complex, regulates RNF2 ubiquitin ligase activity. Plays a redundant role with PCGF5 as part of a PRC1-like complex that mediates monoubiquitination of histone H2A 'Lys-119' on the X chromosome and is required for normal silencing of one copy of the X chromosome in XX females. The protein is Polycomb group RING finger protein 3 (PcgF3) of Mus musculus (Mouse).